The following is a 217-amino-acid chain: Vesicle transport through interaction with t-SNAREs homolog 1A (217 aa).

Over 1 to 192 (MSSDFEGYEQ…GMLRRIIQNR (192 aa)) the chain is Cytoplasmic. Coiled coils occupy residues 31–92 (PDEK…KRSR) and 112–178 (ENQR…GKSS). Residues 193–213 (ILLVILGIIVVITILMAITFS) traverse the membrane as a helical segment. The Extracellular segment spans residues 214 to 217 (VRRH).

It belongs to the VTI1 family. In terms of assembly, interacts with distinct SNARE complexes that contain either STX5 or STX6. Interacts with NAPA and, to a lesser extent, with NAPG. Identified in a complex containing STX6, STX12, VAMP4 and VTI1A.

The protein localises to the cytoplasmic vesicle. It is found in the golgi apparatus membrane. Its function is as follows. V-SNARE that mediates vesicle transport pathways through interactions with t-SNAREs on the target membrane. These interactions are proposed to mediate aspects of the specificity of vesicle trafficking and to promote fusion of the lipid bilayers. Involved in vesicular transport from the late endosomes to the trans-Golgi network. Along with VAMP7, involved in an non-conventional RAB1-dependent traffic route to the cell surface used by KCNIP1 and KCND2. May be involved in increased cytokine secretion associated with cellular senescence. This Homo sapiens (Human) protein is Vesicle transport through interaction with t-SNAREs homolog 1A (VTI1A).